The primary structure comprises 229 residues: Enolase-phosphatase E1 (229 aa).

It belongs to the HAD-like hydrolase superfamily. MasA/MtnC family. As to quaternary structure, monomer. The cofactor is Mg(2+).

The enzyme catalyses 5-methylsulfanyl-2,3-dioxopentyl phosphate + H2O = 1,2-dihydroxy-5-(methylsulfanyl)pent-1-en-3-one + phosphate. It functions in the pathway amino-acid biosynthesis; L-methionine biosynthesis via salvage pathway; L-methionine from S-methyl-5-thio-alpha-D-ribose 1-phosphate: step 3/6. Its pathway is amino-acid biosynthesis; L-methionine biosynthesis via salvage pathway; L-methionine from S-methyl-5-thio-alpha-D-ribose 1-phosphate: step 4/6. Functionally, bifunctional enzyme that catalyzes the enolization of 2,3-diketo-5-methylthiopentyl-1-phosphate (DK-MTP-1-P) into the intermediate 2-hydroxy-3-keto-5-methylthiopentenyl-1-phosphate (HK-MTPenyl-1-P), which is then dephosphorylated to form the acireductone 1,2-dihydroxy-3-keto-5-methylthiopentene (DHK-MTPene). In Pectobacterium carotovorum subsp. carotovorum (strain PC1), this protein is Enolase-phosphatase E1.